We begin with the raw amino-acid sequence, 423 residues long: GPI mannosyltransferase 2 (423 aa).

A run of 9 helical transmembrane segments spans residues 7 to 27 (LTLI…ILSG), 102 to 122 (VILG…LVLY), 128 to 148 (IFNP…PTAT), 151 to 171 (APYT…LLSI), 191 to 211 (TGIF…AHIF), 228 to 248 (FLSA…TETV), 298 to 318 (LAMP…SHLV), 333 to 353 (PPPI…LLLF), and 400 to 420 (YWIG…AGHY).

Belongs to the PIGV family.

It is found in the endoplasmic reticulum membrane. It participates in glycolipid biosynthesis; glycosylphosphatidylinositol-anchor biosynthesis. Functionally, mannosyltransferase involved in glycosylphosphatidylinositol-anchor biosynthesis. Transfers the second mannose to the glycosylphosphatidylinositol during GPI precursor assembly. The polypeptide is GPI mannosyltransferase 2 (GPI18) (Cryptococcus neoformans var. neoformans serotype D (strain JEC21 / ATCC MYA-565) (Filobasidiella neoformans)).